We begin with the raw amino-acid sequence, 347 residues long: Transcription factor JunB (347 aa).

Glycyl lysine isopeptide (Lys-Gly) (interchain with G-Cter in SUMO2) cross-links involve residues Lys-4, Lys-33, and Lys-36. The interval 50-77 is disordered; that stretch reads LKAPGARGPGPEGNGGGSYFSSQGSDTG. The segment covering 56 to 67 has biased composition (gly residues); sequence RGPGPEGNGGGS. Residues 68–77 show a composition bias toward polar residues; it reads YFSSQGSDTG. A Glycyl lysine isopeptide (Lys-Gly) (interchain with G-Cter in SUMO2) cross-link involves residue Lys-81. A phosphothreonine mark is found at Thr-102 and Thr-104. Ser-117 carries the post-translational modification Phosphoserine. Lys-141 is covalently cross-linked (Glycyl lysine isopeptide (Lys-Gly) (interchain with G-Cter in SUMO2)). Lys-240 carries the N6-acetyllysine; alternate modification. Lys-240 participates in a covalent cross-link: Glycyl lysine isopeptide (Lys-Gly) (interchain with G-Cter in SUMO1); alternate. Lys-240 participates in a covalent cross-link: Glycyl lysine isopeptide (Lys-Gly) (interchain with G-Cter in SUMO2); alternate. Residues 241-253 show a composition bias toward basic and acidic residues; it reads EEPQTVPEARSRD. A disordered region spans residues 241–260; it reads EEPQTVPEARSRDATPPVSP. A Phosphoserine modification is found at Ser-251. A Phosphothreonine modification is found at Thr-255. Phosphoserine is present on Ser-259. Residues 268 to 295 are basic motif; it reads RIKVERKRLRNRLAATKCRKRKLERIAR. The region spanning 268–331 is the bZIP domain; the sequence is RIKVERKRLR…AQLKQKVMTH (64 aa). The segment at 296-324 is leucine-zipper; that stretch reads LEDKVKTLKAENAGLSSTAGLLREQVAQL. A Glycyl lysine isopeptide (Lys-Gly) (interchain with G-Cter in SUMO2) cross-link involves residue Lys-343.

The protein belongs to the bZIP family. Jun subfamily. Binds DNA as a homodimer or as a heterodimer with another member of the Jun/Fos family. Component of an AP-1 transcription factor complex composed of JUN-FOS heterodimers. As part of the AP-1 transcription factor complex, forms heterodimers with FOSB, thereby binding to the AP-1 consensus sequence and stimulating transcription. Interacts with ITCH (via its WW domains). Post-translationally, ubiquitinated by ITCH, leading to its degradation.

Its subcellular location is the nucleus. Its function is as follows. Transcription factor involved in regulating gene activity following the primary growth factor response. Binds to the DNA sequence 5'-TGA[GC]TCA-3'. Heterodimerizes with proteins of the FOS family to form an AP-1 transcription complex, thereby enhancing its DNA binding activity to an AP-1 consensus sequence and its transcriptional activity. This is Transcription factor JunB (JUNB) from Bos taurus (Bovine).